The sequence spans 316 residues: Lipoyl synthase (316 aa).

[4Fe-4S] cluster contacts are provided by C66, C71, C77, C92, C96, C99, and S306. The region spanning 78-295 (YSQQTATFMV…ADIAKSMGFK (218 aa)) is the Radical SAM core domain.

It belongs to the radical SAM superfamily. Lipoyl synthase family. [4Fe-4S] cluster serves as cofactor.

It is found in the cytoplasm. The catalysed reaction is [[Fe-S] cluster scaffold protein carrying a second [4Fe-4S](2+) cluster] + N(6)-octanoyl-L-lysyl-[protein] + 2 oxidized [2Fe-2S]-[ferredoxin] + 2 S-adenosyl-L-methionine + 4 H(+) = [[Fe-S] cluster scaffold protein] + N(6)-[(R)-dihydrolipoyl]-L-lysyl-[protein] + 4 Fe(3+) + 2 hydrogen sulfide + 2 5'-deoxyadenosine + 2 L-methionine + 2 reduced [2Fe-2S]-[ferredoxin]. It participates in protein modification; protein lipoylation via endogenous pathway; protein N(6)-(lipoyl)lysine from octanoyl-[acyl-carrier-protein]: step 2/2. Its function is as follows. Catalyzes the radical-mediated insertion of two sulfur atoms into the C-6 and C-8 positions of the octanoyl moiety bound to the lipoyl domains of lipoate-dependent enzymes, thereby converting the octanoylated domains into lipoylated derivatives. This chain is Lipoyl synthase, found in Rhodopirellula baltica (strain DSM 10527 / NCIMB 13988 / SH1).